A 180-amino-acid polypeptide reads, in one-letter code: Translation initiation factor IF-3 (180 aa).

It belongs to the IF-3 family. In terms of assembly, monomer.

It is found in the cytoplasm. In terms of biological role, IF-3 binds to the 30S ribosomal subunit and shifts the equilibrium between 70S ribosomes and their 50S and 30S subunits in favor of the free subunits, thus enhancing the availability of 30S subunits on which protein synthesis initiation begins. The sequence is that of Translation initiation factor IF-3 from Klebsiella pneumoniae.